The chain runs to 351 residues: Nicotinate-nucleotide--dimethylbenzimidazole phosphoribosyltransferase (351 aa).

The active-site Proton acceptor is the glutamate 317.

Belongs to the CobT family.

The enzyme catalyses 5,6-dimethylbenzimidazole + nicotinate beta-D-ribonucleotide = alpha-ribazole 5'-phosphate + nicotinate + H(+). It functions in the pathway nucleoside biosynthesis; alpha-ribazole biosynthesis; alpha-ribazole from 5,6-dimethylbenzimidazole: step 1/2. Catalyzes the synthesis of alpha-ribazole-5'-phosphate from nicotinate mononucleotide (NAMN) and 5,6-dimethylbenzimidazole (DMB). The polypeptide is Nicotinate-nucleotide--dimethylbenzimidazole phosphoribosyltransferase (Pseudomonas putida (strain GB-1)).